Here is a 171-residue protein sequence, read N- to C-terminus: Methylated-DNA--protein-cysteine methyltransferase (171 aa).

The Nucleophile; methyl group acceptor role is filled by C139.

Belongs to the MGMT family.

It is found in the cytoplasm. It carries out the reaction a 6-O-methyl-2'-deoxyguanosine in DNA + L-cysteinyl-[protein] = S-methyl-L-cysteinyl-[protein] + a 2'-deoxyguanosine in DNA. The catalysed reaction is a 4-O-methyl-thymidine in DNA + L-cysteinyl-[protein] = a thymidine in DNA + S-methyl-L-cysteinyl-[protein]. In terms of biological role, involved in the cellular defense against the biological effects of O6-methylguanine (O6-MeG) and O4-methylthymine (O4-MeT) in DNA. Repairs the methylated nucleobase in DNA by stoichiometrically transferring the methyl group to a cysteine residue in the enzyme. This is a suicide reaction: the enzyme is irreversibly inactivated. The chain is Methylated-DNA--protein-cysteine methyltransferase from Salmonella typhi.